The sequence spans 901 residues: Valine--tRNA ligase (901 aa).

Positions 536–540 match the 'KMSKS' region motif; sequence KLSKS. Lysine 539 lines the ATP pocket. Positions 831 to 901 form a coiled coil; it reads LEGLISFEKE…KLQGNLEVLS (71 aa).

Belongs to the class-I aminoacyl-tRNA synthetase family. ValS type 1 subfamily. In terms of assembly, monomer.

Its subcellular location is the cytoplasm. The enzyme catalyses tRNA(Val) + L-valine + ATP = L-valyl-tRNA(Val) + AMP + diphosphate. Catalyzes the attachment of valine to tRNA(Val). As ValRS can inadvertently accommodate and process structurally similar amino acids such as threonine, to avoid such errors, it has a 'posttransfer' editing activity that hydrolyzes mischarged Thr-tRNA(Val) in a tRNA-dependent manner. The sequence is that of Valine--tRNA ligase from Chlorobaculum tepidum (strain ATCC 49652 / DSM 12025 / NBRC 103806 / TLS) (Chlorobium tepidum).